The primary structure comprises 194 residues: MKIIDKKIEQFAQYLQRKNNLDHIQFLKIRLGMQVLAINIEKSIVVYGLAIIFHTFFYTLLTHLSYFLIRRHAHGTHANSSLLCHIQNIIFFIIFPYLIIKLDINYFVLLSMALVGLIITILYAPAATKKQPIPRRLVKRKKILSIFLYCTIVVISLVTKEPVNKLILFGVILESLTLLPIFFPKEDINHGKHF.

5 helical membrane passes run 44 to 64, 80 to 100, 107 to 127, 142 to 162, and 163 to 183; these read IVVYGLAIIFHTFFYTLLTHL, SSLLCHIQNIIFFIIFPYLII, FVLLSMALVGLIITILYAPAA, KILSIFLYCTIVVISLVTKEP, and VNKLILFGVILESLTLLPIFF.

The protein belongs to the AgrB family.

It localises to the cell membrane. Its function is as follows. Essential for the production of a quorum sensing system signal molecule, the autoinducing peptide (AIP). This quorum sensing system is responsible for the regulation of the expression of virulence factor genes. Involved in the proteolytic processing of AgrD, the precursor of AIP. This chain is Accessory gene regulator protein B, found in Staphylococcus epidermidis.